Consider the following 190-residue polypeptide: Elongation factor P (190 aa).

It belongs to the elongation factor P family.

The protein resides in the cytoplasm. Its pathway is protein biosynthesis; polypeptide chain elongation. In terms of biological role, involved in peptide bond synthesis. Stimulates efficient translation and peptide-bond synthesis on native or reconstituted 70S ribosomes in vitro. Probably functions indirectly by altering the affinity of the ribosome for aminoacyl-tRNA, thus increasing their reactivity as acceptors for peptidyl transferase. This Mycoplasma genitalium (strain ATCC 33530 / DSM 19775 / NCTC 10195 / G37) (Mycoplasmoides genitalium) protein is Elongation factor P (efp).